The chain runs to 532 residues: UDP-N-acetylmuramyl-tripeptide synthetase (532 aa).

Residue serine 34 participates in UDP-N-acetyl-alpha-D-muramoyl-L-alanyl-D-glutamate binding. 127 to 133 (GTEGKSS) contributes to the ATP binding site. Residues 171–172 (TT), serine 198, and arginine 208 each bind UDP-N-acetyl-alpha-D-muramoyl-L-alanyl-D-glutamate. At lysine 240 the chain carries N6-carboxylysine.

This sequence belongs to the MurCDEF family. MurE subfamily. In terms of processing, carboxylation is probably crucial for Mg(2+) binding and, consequently, for the gamma-phosphate positioning of ATP.

It is found in the cytoplasm. It functions in the pathway cell wall biogenesis; peptidoglycan biosynthesis. Functionally, catalyzes the addition of an amino acid to the nucleotide precursor UDP-N-acetylmuramoyl-L-alanyl-D-glutamate (UMAG) in the biosynthesis of bacterial cell-wall peptidoglycan. In Treponema denticola (strain ATCC 35405 / DSM 14222 / CIP 103919 / JCM 8153 / KCTC 15104), this protein is UDP-N-acetylmuramyl-tripeptide synthetase.